The chain runs to 253 residues: 3-deoxy-manno-octulosonate cytidylyltransferase (253 aa).

The protein belongs to the KdsB family.

The protein resides in the cytoplasm. It carries out the reaction 3-deoxy-alpha-D-manno-oct-2-ulosonate + CTP = CMP-3-deoxy-beta-D-manno-octulosonate + diphosphate. It functions in the pathway nucleotide-sugar biosynthesis; CMP-3-deoxy-D-manno-octulosonate biosynthesis; CMP-3-deoxy-D-manno-octulosonate from 3-deoxy-D-manno-octulosonate and CTP: step 1/1. It participates in bacterial outer membrane biogenesis; lipopolysaccharide biosynthesis. Its function is as follows. Activates KDO (a required 8-carbon sugar) for incorporation into bacterial lipopolysaccharide in Gram-negative bacteria. The polypeptide is 3-deoxy-manno-octulosonate cytidylyltransferase (Haemophilus ducreyi (strain 35000HP / ATCC 700724)).